The primary structure comprises 542 residues: Phosphoenolpyruvate carboxykinase (ATP) (542 aa).

Arginine 67, tyrosine 208, and lysine 214 together coordinate substrate. Residues lysine 214, histidine 233, and 249 to 257 (GLSGTGKTT) contribute to the ATP site. Residues lysine 214 and histidine 233 each contribute to the Mn(2+) site. Position 270 (aspartate 270) interacts with Mn(2+). ATP-binding positions include glutamate 298, arginine 334, 450 to 451 (RI), and threonine 456. Arginine 334 contributes to the substrate binding site.

The protein belongs to the phosphoenolpyruvate carboxykinase (ATP) family. Monomer. Mn(2+) serves as cofactor.

It localises to the cytoplasm. It carries out the reaction oxaloacetate + ATP = phosphoenolpyruvate + ADP + CO2. Its pathway is carbohydrate biosynthesis; gluconeogenesis. Its function is as follows. Involved in the gluconeogenesis. Catalyzes the conversion of oxaloacetate (OAA) to phosphoenolpyruvate (PEP) through direct phosphoryl transfer between the nucleoside triphosphate and OAA. This Vibrio campbellii (strain ATCC BAA-1116) protein is Phosphoenolpyruvate carboxykinase (ATP).